Here is a 256-residue protein sequence, read N- to C-terminus: Hemin import ATP-binding protein HmuV (256 aa).

The ABC transporter domain maps to 2–238; sequence ISAQNLVYSL…QALTMLYGAD (237 aa). 34–41 is an ATP binding site; it reads GPNGAGKS.

The protein belongs to the ABC transporter superfamily. Heme (hemin) importer (TC 3.A.1.14.5) family. In terms of assembly, the complex is composed of two ATP-binding proteins (HmuV), two transmembrane proteins (HmuU) and a solute-binding protein (HmuT).

It is found in the cell inner membrane. Functionally, part of the ABC transporter complex HmuTUV involved in hemin import. Responsible for energy coupling to the transport system. The polypeptide is Hemin import ATP-binding protein HmuV (Escherichia coli O157:H7).